Here is a 470-residue protein sequence, read N- to C-terminus: Fumarate reductase 1 (470 aa).

An FAD-binding site is contributed by 6 to 20 (VVVIGTGLAGLAAAN). A Phosphoserine modification is found at Ser-66. Active-site residues include His-249 and Arg-272.

The protein belongs to the FAD-dependent oxidoreductase 2 family. FRD/SDH subfamily. The cofactor is FAD. Post-translationally, the N-terminus is blocked.

It is found in the cytoplasm. It carries out the reaction succinate + NAD(+) = fumarate + NADH + H(+). Its function is as follows. Irreversibly catalyzes the reduction of fumarate to succinate. Together with the second isozyme of soluble fumarate reductase (OSM1), essential for anaerobic growth. Involved in maintaining redox balance. Reduction of fumarate is the main source of succinate during fermentation, and under anaerobic conditions, the formation of succinate is strictly required for the reoxidation of FADH(2). This Saccharomyces cerevisiae (strain ATCC 204508 / S288c) (Baker's yeast) protein is Fumarate reductase 1 (FRD1).